The chain runs to 742 residues: Probable serine/threonine-protein kinase PkwA (742 aa).

The 251-residue stretch at 16-266 (YRLVSRLGAG…TAELLAQLST (251 aa)) folds into the Protein kinase domain. ATP-binding positions include 22 to 30 (LGAGGMGQV) and lysine 44. The active-site Proton acceptor is the aspartate 138. A disordered region spans residues 266–394 (TDHTGDDWPP…PWSPPRVQPP (129 aa)). Residues 301–318 (EPPPPSHGPPRPSEPLPD) are compositionally biased toward pro residues. Over residues 343–356 (LEEKPIQVIHEPER) the composition is skewed to basic and acidic residues. Residues 377–392 (PRPAAPQPPWSPPRVQ) are compositionally biased toward pro residues. 7 WD repeats span residues 455–496 (ILTT…ELHT), 497–538 (LEGH…ERAV), 539–580 (FEGH…EHAV), 581–621 (LKGH…KERD), 622–663 (VLQA…ALHT), 664–705 (FEGH…EHTT), and 706–742 (LEGH…IATE).

This sequence belongs to the protein kinase superfamily. Ser/Thr protein kinase family.

The enzyme catalyses L-seryl-[protein] + ATP = O-phospho-L-seryl-[protein] + ADP + H(+). The catalysed reaction is L-threonyl-[protein] + ATP = O-phospho-L-threonyl-[protein] + ADP + H(+). May play a regulatory role during the complex growth cycle and in secondary metabolite production. This chain is Probable serine/threonine-protein kinase PkwA (pkwA), found in Thermomonospora curvata.